A 124-amino-acid chain; its full sequence is Small ribosomal subunit protein uS12 (124 aa).

Residues 8–30 form a disordered region; it reads IRSARQDTEKQTKSPALKSCPQR. Asp89 carries the 3-methylthioaspartic acid modification. The segment at 103–124 is disordered; that stretch reads DTAGVKDRKQSRSKYGAKKPKA. Positions 113-124 are enriched in basic residues; sequence SRSKYGAKKPKA.

Belongs to the universal ribosomal protein uS12 family. In terms of assembly, part of the 30S ribosomal subunit. Contacts proteins S8 and S17. May interact with IF1 in the 30S initiation complex.

With S4 and S5 plays an important role in translational accuracy. Functionally, interacts with and stabilizes bases of the 16S rRNA that are involved in tRNA selection in the A site and with the mRNA backbone. Located at the interface of the 30S and 50S subunits, it traverses the body of the 30S subunit contacting proteins on the other side and probably holding the rRNA structure together. The combined cluster of proteins S8, S12 and S17 appears to hold together the shoulder and platform of the 30S subunit. This Trichodesmium erythraeum (strain IMS101) protein is Small ribosomal subunit protein uS12.